Here is a 211-residue protein sequence, read N- to C-terminus: uncharacterized protein (211 aa).

Helical transmembrane passes span 77-97, 113-133, 152-172, and 179-199; these read FLMF…AITI, GISV…VLIG, ILIS…NVIP, and LLTP…PLFG.

Its subcellular location is the cell membrane. This is an uncharacterized protein from Bacillus subtilis (strain 168).